The sequence spans 105 residues: Large ribosomal subunit protein uL24 (105 aa).

It belongs to the universal ribosomal protein uL24 family. As to quaternary structure, part of the 50S ribosomal subunit.

One of two assembly initiator proteins, it binds directly to the 5'-end of the 23S rRNA, where it nucleates assembly of the 50S subunit. Its function is as follows. One of the proteins that surrounds the polypeptide exit tunnel on the outside of the subunit. The sequence is that of Large ribosomal subunit protein uL24 from Aeromonas salmonicida (strain A449).